Here is a 352-residue protein sequence, read N- to C-terminus: UPF0324 membrane protein blr3189 (352 aa).

Helical transmembrane passes span 21–43 (IAAL…LLER), 53–71 (YVEA…RSFW), 88–110 (LLEV…ASGI), 114–136 (ASIA…LLGL), 143–165 (LIAC…IIGA), 175–197 (SFTA…LLQL), 204–226 (ILAG…AGLV), 236–253 (LMRV…SLVA), 265–284 (VGFF…LATL), 294–316 (VVGP…LGLG), and 329–351 (VTAA…VHWF).

Belongs to the UPF0324 family.

The protein resides in the cell membrane. The chain is UPF0324 membrane protein blr3189 from Bradyrhizobium diazoefficiens (strain JCM 10833 / BCRC 13528 / IAM 13628 / NBRC 14792 / USDA 110).